Here is a 130-residue protein sequence, read N- to C-terminus: MAKTANKINIRKVKRKTPKAIIHVQASFNNTIVTVTDVQGQVISSCSAGACGFKGAKKNTPFAAQTAAENAIRLLIDQGLKQAEVMISGPGRGRDTALRAIRNSGITLSLVRDVTPLPHNGCRRPKTRRV.

The protein belongs to the universal ribosomal protein uS11 family. As to quaternary structure, part of the 30S ribosomal subunit.

The protein resides in the plastid. It localises to the chloroplast. The chain is Small ribosomal subunit protein uS11c from Spirogyra maxima (Green alga).